The following is a 142-amino-acid chain: Large ribosomal subunit protein uL11 (142 aa).

This sequence belongs to the universal ribosomal protein uL11 family. In terms of assembly, part of the ribosomal stalk of the 50S ribosomal subunit. Interacts with L10 and the large rRNA to form the base of the stalk. L10 forms an elongated spine to which L12 dimers bind in a sequential fashion forming a multimeric L10(L12)X complex. One or more lysine residues are methylated.

Its function is as follows. Forms part of the ribosomal stalk which helps the ribosome interact with GTP-bound translation factors. The sequence is that of Large ribosomal subunit protein uL11 from Pectobacterium atrosepticum (strain SCRI 1043 / ATCC BAA-672) (Erwinia carotovora subsp. atroseptica).